We begin with the raw amino-acid sequence, 395 residues long: Elongation factor Tu (395 aa).

The tr-type G domain occupies 10 to 204 (KPHVNIGTIG…TVDEYIPTPQ (195 aa)). Residues 19-26 (GHVDHGKT) are G1. Position 19-26 (19-26 (GHVDHGKT)) interacts with GTP. Mg(2+) is bound at residue threonine 26. The G2 stretch occupies residues 60-64 (GITIN). Residues 81-84 (DAPG) are G3. Residues 81 to 85 (DAPGH) and 136 to 139 (NKCD) each bind GTP. A G4 region spans residues 136-139 (NKCD). A G5 region spans residues 174-176 (SAL).

It belongs to the TRAFAC class translation factor GTPase superfamily. Classic translation factor GTPase family. EF-Tu/EF-1A subfamily. Monomer.

Its subcellular location is the cytoplasm. The enzyme catalyses GTP + H2O = GDP + phosphate + H(+). GTP hydrolase that promotes the GTP-dependent binding of aminoacyl-tRNA to the A-site of ribosomes during protein biosynthesis. This chain is Elongation factor Tu, found in Ligilactobacillus salivarius (strain UCC118) (Lactobacillus salivarius).